The following is a 101-amino-acid chain: Small ribosomal subunit protein bS18c (101 aa).

The protein belongs to the bacterial ribosomal protein bS18 family. As to quaternary structure, part of the 30S ribosomal subunit.

It is found in the plastid. The protein resides in the chloroplast. The chain is Small ribosomal subunit protein bS18c from Coffea arabica (Arabian coffee).